Here is a 277-residue protein sequence, read N- to C-terminus: MEMO1 family protein CTN_0605 (277 aa).

The protein belongs to the MEMO1 family.

This chain is MEMO1 family protein CTN_0605, found in Thermotoga neapolitana (strain ATCC 49049 / DSM 4359 / NBRC 107923 / NS-E).